The sequence spans 273 residues: Large ribosomal subunit protein uL2 (273 aa).

2 disordered regions span residues 28 to 53 (KPFAPLVEKNSKSGGRNNNGRITTRH) and 221 to 273 (RGTA…RRSK). The span at 39 to 48 (KSGGRNNNGR) shows a compositional bias: low complexity.

Belongs to the universal ribosomal protein uL2 family. As to quaternary structure, part of the 50S ribosomal subunit. Forms a bridge to the 30S subunit in the 70S ribosome.

One of the primary rRNA binding proteins. Required for association of the 30S and 50S subunits to form the 70S ribosome, for tRNA binding and peptide bond formation. It has been suggested to have peptidyltransferase activity; this is somewhat controversial. Makes several contacts with the 16S rRNA in the 70S ribosome. The chain is Large ribosomal subunit protein uL2 from Enterobacter sp. (strain 638).